The sequence spans 382 residues: Queuine tRNA-ribosyltransferase (382 aa).

Asp-93 (proton acceptor) is an active-site residue. Substrate contacts are provided by residues 93–97 (DSGGF), Asp-147, Gln-191, and Gly-218. An RNA binding region spans residues 249–255 (GVGKPED). The active-site Nucleophile is Asp-268. The segment at 273 to 277 (TRNAR) is RNA binding; important for wobble base 34 recognition. Cys-306, Cys-308, Cys-311, and His-337 together coordinate Zn(2+).

The protein belongs to the queuine tRNA-ribosyltransferase family. In terms of assembly, homodimer. Within each dimer, one monomer is responsible for RNA recognition and catalysis, while the other monomer binds to the replacement base PreQ1. Zn(2+) serves as cofactor.

It catalyses the reaction 7-aminomethyl-7-carbaguanine + guanosine(34) in tRNA = 7-aminomethyl-7-carbaguanosine(34) in tRNA + guanine. It participates in tRNA modification; tRNA-queuosine biosynthesis. Its function is as follows. Catalyzes the base-exchange of a guanine (G) residue with the queuine precursor 7-aminomethyl-7-deazaguanine (PreQ1) at position 34 (anticodon wobble position) in tRNAs with GU(N) anticodons (tRNA-Asp, -Asn, -His and -Tyr). Catalysis occurs through a double-displacement mechanism. The nucleophile active site attacks the C1' of nucleotide 34 to detach the guanine base from the RNA, forming a covalent enzyme-RNA intermediate. The proton acceptor active site deprotonates the incoming PreQ1, allowing a nucleophilic attack on the C1' of the ribose to form the product. After dissociation, two additional enzymatic reactions on the tRNA convert PreQ1 to queuine (Q), resulting in the hypermodified nucleoside queuosine (7-(((4,5-cis-dihydroxy-2-cyclopenten-1-yl)amino)methyl)-7-deazaguanosine). This Actinobacillus pleuropneumoniae serotype 5b (strain L20) protein is Queuine tRNA-ribosyltransferase.